We begin with the raw amino-acid sequence, 73 residues long: Large ribosomal subunit protein bL31 (73 aa).

It belongs to the bacterial ribosomal protein bL31 family. Type A subfamily. In terms of assembly, part of the 50S ribosomal subunit.

Binds the 23S rRNA. This chain is Large ribosomal subunit protein bL31, found in Bartonella tribocorum (strain CIP 105476 / IBS 506).